A 341-amino-acid chain; its full sequence is S-adenosylmethionine:tRNA ribosyltransferase-isomerase (341 aa).

Belongs to the QueA family. As to quaternary structure, monomer.

It is found in the cytoplasm. The catalysed reaction is 7-aminomethyl-7-carbaguanosine(34) in tRNA + S-adenosyl-L-methionine = epoxyqueuosine(34) in tRNA + adenine + L-methionine + 2 H(+). It participates in tRNA modification; tRNA-queuosine biosynthesis. Functionally, transfers and isomerizes the ribose moiety from AdoMet to the 7-aminomethyl group of 7-deazaguanine (preQ1-tRNA) to give epoxyqueuosine (oQ-tRNA). This chain is S-adenosylmethionine:tRNA ribosyltransferase-isomerase, found in Acetivibrio thermocellus (strain ATCC 27405 / DSM 1237 / JCM 9322 / NBRC 103400 / NCIMB 10682 / NRRL B-4536 / VPI 7372) (Clostridium thermocellum).